The primary structure comprises 1256 residues: Topoisomerase 1-associated factor 1 (1256 aa).

Positions 26-38 are enriched in acidic residues; that stretch reads GFIVSDEENDNLE. Disordered regions lie at residues 26 to 58, 695 to 725, 1052 to 1121, and 1176 to 1256; these read GFIV…VDEY, SKKK…RTHA, SGAE…EAFF, and SDGV…DEDE. Over residues 39 to 53 the composition is skewed to basic and acidic residues; it reads NENRNERDPDSRNQD. Basic residues predominate over residues 1060 to 1086; that stretch reads GKARKRGNKSSSTIKKKSLQSRSRRPP. Composition is skewed to basic and acidic residues over residues 1097–1110 and 1179–1190; these read ELRK…FVHD and VDTHSHQDDKSQ. A compositionally biased stretch (acidic residues) spans 1194 to 1204; that stretch reads SENEDSSEEVS. Over residues 1222-1231 the composition is skewed to low complexity; the sequence is DNNVSENYVS.

It belongs to the timeless family. As to quaternary structure, component of the fork protection complex (FPC) consisting of TOF1 and CSM3.

Its subcellular location is the nucleus. Its function is as follows. Forms a fork protection complex (FPC) with CSM3 and which is required for chromosome segregation during meiosis and DNA damage repair. FPC coordinates leading and lagging strand synthesis and moves with the replication fork. FPC stabilizes replication forks in a configuration that is recognized by replication checkpoint sensors. The polypeptide is Topoisomerase 1-associated factor 1 (TOF1) (Scheffersomyces stipitis (strain ATCC 58785 / CBS 6054 / NBRC 10063 / NRRL Y-11545) (Yeast)).